Here is a 470-residue protein sequence, read N- to C-terminus: Neuraminidase (470 aa).

Over 1 to 6 (MNPNQK) the chain is Intravirion. The chain crosses the membrane as a helical span at residues 7–27 (IITIGSASIVLTTIGLLLQIT). The interval 11–33 (GSASIVLTTIGLLLQITSLCSIW) is involved in apical transport and lipid raft association. At 28–470 (SLCSIWFSHY…GALLPFDIDK (443 aa)) the chain is on the virion surface side. Positions 36-88 (HYNQVTQPHEQACSNNTTNYYNETFVNVTNVQNNYTTIIEPSAPNVVHYSSGR) are hypervariable stalk region. Asn-50, Asn-51, Asn-57, Asn-62, and Asn-69 each carry an N-linked (GlcNAc...) asparagine; by host glycan. Residues 90–470 (LCPVKGWAPL…GALLPFDIDK (381 aa)) are head of neuraminidase. 8 cysteine pairs are disulfide-bonded: Cys-91-Cys-418, Cys-123-Cys-128, Cys-183-Cys-230, Cys-232-Cys-237, Cys-278-Cys-291, Cys-280-Cys-289, Cys-317-Cys-334, and Cys-422-Cys-447. Arg-117 lines the substrate pocket. Asn-145 carries N-linked (GlcNAc...) asparagine; by host glycosylation. The Proton donor/acceptor role is filled by Asp-150. Residue Arg-151 participates in substrate binding. Asn-269 carries N-linked (GlcNAc...) asparagine; by host glycosylation. 276 to 277 (EE) is a binding site for substrate. Position 292 (Arg-292) interacts with substrate. Ca(2+) contacts are provided by Asp-293, Gly-297, and Asp-323. Arg-369 is a substrate binding site. N-linked (GlcNAc...) asparagine; by host glycosylation is present at Asn-399. Tyr-403 functions as the Nucleophile in the catalytic mechanism. Asn-417 carries N-linked (GlcNAc...) asparagine; by host glycosylation.

Belongs to the glycosyl hydrolase 34 family. As to quaternary structure, homotetramer. Requires Ca(2+) as cofactor. N-glycosylated.

It is found in the virion membrane. Its subcellular location is the host apical cell membrane. It catalyses the reaction Hydrolysis of alpha-(2-&gt;3)-, alpha-(2-&gt;6)-, alpha-(2-&gt;8)- glycosidic linkages of terminal sialic acid residues in oligosaccharides, glycoproteins, glycolipids, colominic acid and synthetic substrates.. With respect to regulation, inhibited by the neuraminidase inhibitors zanamivir (Relenza) and oseltamivir (Tamiflu). These drugs interfere with the release of progeny virus from infected cells and are effective against all influenza strains. Resistance to neuraminidase inhibitors is quite rare. Functionally, catalyzes the removal of terminal sialic acid residues from viral and cellular glycoconjugates. Cleaves off the terminal sialic acids on the glycosylated HA during virus budding to facilitate virus release. Additionally helps virus spread through the circulation by further removing sialic acids from the cell surface. These cleavages prevent self-aggregation and ensure the efficient spread of the progeny virus from cell to cell. Otherwise, infection would be limited to one round of replication. Described as a receptor-destroying enzyme because it cleaves a terminal sialic acid from the cellular receptors. May facilitate viral invasion of the upper airways by cleaving the sialic acid moieties on the mucin of the airway epithelial cells. Likely to plays a role in the budding process through its association with lipid rafts during intracellular transport. May additionally display a raft-association independent effect on budding. Plays a role in the determination of host range restriction on replication and virulence. Sialidase activity in late endosome/lysosome traffic seems to enhance virus replication. The protein is Neuraminidase of Influenza A virus (strain A/Turkey/Ontario/6118/1968 H8N4).